A 106-amino-acid chain; its full sequence is ATP-dependent Clp protease adapter protein ClpS (106 aa).

This sequence belongs to the ClpS family. As to quaternary structure, binds to the N-terminal domain of the chaperone ClpA.

Functionally, involved in the modulation of the specificity of the ClpAP-mediated ATP-dependent protein degradation. The sequence is that of ATP-dependent Clp protease adapter protein ClpS from Salmonella gallinarum (strain 287/91 / NCTC 13346).